Consider the following 495-residue polypeptide: L-arabinose isomerase (495 aa).

Mn(2+)-binding residues include E305, E332, H349, and H448.

This sequence belongs to the arabinose isomerase family. Mn(2+) is required as a cofactor.

The enzyme catalyses beta-L-arabinopyranose = L-ribulose. The protein operates within carbohydrate degradation; L-arabinose degradation via L-ribulose; D-xylulose 5-phosphate from L-arabinose (bacterial route): step 1/3. Functionally, catalyzes the conversion of L-arabinose to L-ribulose. This is L-arabinose isomerase from Mannheimia succiniciproducens (strain KCTC 0769BP / MBEL55E).